Here is a 481-residue protein sequence, read N- to C-terminus: Velvet complex subunit B (481 aa).

Disordered regions lie at residues 1–157 (MNSA…YSKI) and 241–339 (GTGA…NGYG). Composition is skewed to pro residues over residues 36 to 45 (HPPPPLPPPS), 53 to 62 (PPLPPPPSAP), and 96 to 112 (PYAP…QYPR). One can recognise a Velvet domain in the interval 160–464 (GSGWKYSLDV…ANQGIKIPIR (305 aa)). Composition is skewed to low complexity over residues 241–255 (GTGA…TYSS) and 293–325 (QQSY…SAEP).

The protein belongs to the velvet family. VelB subfamily. As to quaternary structure, component of the heterotrimeric velvet complex composed of laeA, veA and velB; VeA acting as a bridging protein between laeA and velB. Forms a heterodimeric complex with vosA; the formation of the velB-vosA complex is light-dependent.

It is found in the nucleus. It localises to the cytoplasm. Functionally, component of the velvet transcription factor complex that controls sexual/asexual developmental ratio in response to light, promoting sexual development in the darkness while stimulating asexual sporulation under illumination. The velvet complex acts as a global regulator for secondary metabolite gene expression. Component of the velB-VosA heterodimeric complex that plays a dual role in activating genes associated with spore maturation and repressing certain development-associated genes. The velB-VosA complex binds DNA through the DNA-binding domain of vosA that recognizes an 11-nucleotide consensus sequence 5'-CTGGCCGCGGC-3' consisting of two motifs in the promoters of key developmental regulatory genes. Controls the biosynthetic gene cluster for beauvericin, a depsipeptide mycotoxin that functions as a virulence determinant. Also regulates chromatin structure and transcription of siderophore biosynthetic genes and is required for infection of tomato plants. The sequence is that of Velvet complex subunit B from Fusarium oxysporum f. sp. lycopersici (strain 4287 / CBS 123668 / FGSC 9935 / NRRL 34936) (Fusarium vascular wilt of tomato).